The chain runs to 318 residues: L-lactate dehydrogenase (318 aa).

NAD(+)-binding positions include valine 17, aspartate 38, lysine 43, tyrosine 69, and glycine 83–alanine 84. Residues glutamine 86 and arginine 92 each contribute to the substrate site. NAD(+)-binding positions include serine 105, alanine 122–asparagine 124, and serine 147. Asparagine 124–aspartate 127 provides a ligand contact to substrate. Aspartate 152–arginine 155 provides a ligand contact to substrate. 2 residues coordinate beta-D-fructose 1,6-bisphosphate: lysine 157 and histidine 172. Catalysis depends on histidine 179, which acts as the Proton acceptor. Tyrosine 223 is subject to Phosphotyrosine. Substrate is bound at residue threonine 232.

Belongs to the LDH/MDH superfamily. LDH family. As to quaternary structure, homotetramer.

The protein localises to the cytoplasm. The catalysed reaction is (S)-lactate + NAD(+) = pyruvate + NADH + H(+). It functions in the pathway fermentation; pyruvate fermentation to lactate; (S)-lactate from pyruvate: step 1/1. Its activity is regulated as follows. Allosterically activated by fructose 1,6-bisphosphate (FBP). In terms of biological role, catalyzes the conversion of lactate to pyruvate. The polypeptide is L-lactate dehydrogenase (Staphylococcus saprophyticus subsp. saprophyticus (strain ATCC 15305 / DSM 20229 / NCIMB 8711 / NCTC 7292 / S-41)).